A 507-amino-acid polypeptide reads, in one-letter code: Glycosyltransferase family 92 protein C33H5.2 (507 aa).

Residues 6–26 (VILVFCASFALFFTFIIFGRY) form a helical membrane-spanning segment. In terms of domain architecture, GT92 spans 155–444 (RDVVMCIAPL…LKCYNEKFYD (290 aa)).

The protein belongs to the glycosyltransferase 92 family.

The protein localises to the membrane. This is Glycosyltransferase family 92 protein C33H5.2 from Caenorhabditis elegans.